The primary structure comprises 1257 residues: Neurocan core protein (1257 aa).

The signal sequence occupies residues 1-22 (MGAESVWASGLLVLWLLLLVSG). Residues 37 to 157 (HMLKSGSGPI…EQDLVTLEVT (121 aa)) form the Ig-like V-type domain. Disulfide bonds link C58/C139, C181/C252, C205/C226, C279/C354, and C303/C324. A glycan (N-linked (GlcNAc...) asparagine) is linked at N121. Link domains follow at residues 159 to 254 (VVFH…YCFA) and 258 to 356 (GGEV…YCFR). N-linked (GlcNAc...) asparagine glycosylation is present at N339. The tract at residues 361-391 (TPQRGDSEIPSSGDEGEIVSAEGPPAPELKP) is disordered. O-linked (Xyl...) (chondroitin sulfate) serine glycans are attached at residues S380 and S410. Over residues 447–459 (SSTGVPSPSSLGV) the composition is skewed to low complexity. Disordered regions lie at residues 447-493 (SSTG…FQQQ), 550-610 (GSLG…AVPS), and 683-707 (GAED…GSPE). Over residues 464–473 (TTPSGTQVAP) the composition is skewed to polar residues. The segment covering 569–580 (SPSTVPSTDSTP) has biased composition (low complexity). A glycan (N-linked (GlcNAc...) asparagine) is linked at N737. O-linked (Xyl...) (chondroitin sulfate) serine glycosylation is present at S944. The region spanning 949 to 985 (PTDPCENNPCLHGGTCRTNGTMYGCSCDQGYAGENCE) is the EGF-like 1 domain. 11 cysteine pairs are disulfide-bonded: C953/C964, C958/C973, C975/C984, C991/C1002, C996/C1011, C1013/C1022, C1029/C1040, C1057/C1149, C1125/C1141, C1156/C1199, and C1185/C1212. N967 carries N-linked (GlcNAc...) asparagine glycosylation. Positions 987 to 1023 (DIDDCLCSPCENGGTCIDEVNGFICLCLPSYGGNLCE) constitute an EGF-like 2; calcium-binding domain. Residues 1025 to 1154 (DTEGCDRGWH…LPYVCKKGTV (130 aa)) enclose the C-type lectin domain. The region spanning 1154–1214 (VLCGPPPAVE…WDRPQIVCTK (61 aa)) is the Sushi domain. Residue N1164 is glycosylated (N-linked (GlcNAc...) asparagine). Basic residues predominate over residues 1215-1244 (PRRSHRMRRHHHHPHRHHKPRKEHRKHKRH). The segment at 1215-1257 (PRRSHRMRRHHHHPHRHHKPRKEHRKHKRHPAEDWEKDEGDFC) is disordered.

The protein belongs to the aggrecan/versican proteoglycan family. Two isoforms were found that probably arise by proteolytic processing. The large isoform is predominant in early postnatal brain, the small isoform is found in adult brain. Post-translationally, O-glycosylated; contains chondroitin sulfate. Early postnatal and adult brain; not expressed in kidney, lung, liver and muscle.

It is found in the secreted. Its function is as follows. May modulate neuronal adhesion and neurite growth during development by binding to neural cell adhesion molecules (NG-CAM and N-CAM). Chondroitin sulfate proteoglycan; binds to hyaluronic acid. In Rattus norvegicus (Rat), this protein is Neurocan core protein (Ncan).